The primary structure comprises 435 residues: U-box domain-containing protein 36 (435 aa).

Residues 227–345 (EAEASKRKAR…LKGKREEEEA (119 aa)) are a coiled coil. One can recognise a U-box domain in the interval 352–426 (EPPQYFICPI…QEWLQLRELL (75 aa)).

It carries out the reaction S-ubiquitinyl-[E2 ubiquitin-conjugating enzyme]-L-cysteine + [acceptor protein]-L-lysine = [E2 ubiquitin-conjugating enzyme]-L-cysteine + N(6)-ubiquitinyl-[acceptor protein]-L-lysine.. It participates in protein modification; protein ubiquitination. Functionally, functions as an E3 ubiquitin ligase. This chain is U-box domain-containing protein 36 (PUB36), found in Arabidopsis thaliana (Mouse-ear cress).